The chain runs to 145 residues: 3-dehydroquinate dehydratase (145 aa).

Tyr-22 acts as the Proton acceptor in catalysis. 3 residues coordinate substrate: Asn-71, His-77, and Asp-84. His-97 (proton donor) is an active-site residue. Residues 98–99 (LS) and Arg-108 contribute to the substrate site.

Belongs to the type-II 3-dehydroquinase family. Homododecamer.

It carries out the reaction 3-dehydroquinate = 3-dehydroshikimate + H2O. It functions in the pathway metabolic intermediate biosynthesis; chorismate biosynthesis; chorismate from D-erythrose 4-phosphate and phosphoenolpyruvate: step 3/7. Its function is as follows. Catalyzes a trans-dehydration via an enolate intermediate. The polypeptide is 3-dehydroquinate dehydratase (Francisella tularensis subsp. tularensis (strain WY96-3418)).